Reading from the N-terminus, the 59-residue chain is Potassium channel toxin alpha-KTx 1.1 (59 aa).

A signal peptide spans 1-22 (MKILSVLLLALIICSIVGWSEA). Glutamine 23 carries the post-translational modification Pyrrolidone carboxylic acid. 3 cysteine pairs are disulfide-bonded: cysteine 29/cysteine 50, cysteine 35/cysteine 55, and cysteine 39/cysteine 57. The interaction with Ca(2+)-activated K(+) channels stretch occupies residues 48-55 (GKCMNKKC).

It belongs to the short scorpion toxin superfamily. Potassium channel inhibitor family. Alpha-KTx 01 subfamily. As to expression, expressed by the venom gland.

It localises to the secreted. In terms of biological role, this toxin inhibits numerous potassium channels: shaker (Ki=227 nM), Kv1.2/KCNA2 (nanomolar range), Kv1.3/KCNA3 (nanomolar range), Kv1.5/KCNA5 (Kd&gt;100 nM), Kv1.6/KCNA6 (Ki=22 nM), KCa1.1/KCNMA1 (IC(50)=5.9 nM). It blocks channel activity by a simple bimolecular inhibition process. It also shows a weak interaction with nicotinic acetylcholine receptors (nAChR), suggesting it may weakly inhibit it. It also exhibits pH-specific antimicrobial activities against bacteria (B.subtilis, E.coli and S.aureus) and the fungus C.albicans. The polypeptide is Potassium channel toxin alpha-KTx 1.1 (Leiurus hebraeus (Hebrew deathstalker scorpion)).